Here is a 221-residue protein sequence, read N- to C-terminus: Large ribosomal subunit protein uL3 (221 aa).

Positions 131–165 (HNQSRGPETHGSRHHRRPGSMGPIKGKIKGKKLPG) are disordered.

Belongs to the universal ribosomal protein uL3 family. As to quaternary structure, part of the 50S ribosomal subunit. Forms a cluster with proteins L14 and L19.

Its function is as follows. One of the primary rRNA binding proteins, it binds directly near the 3'-end of the 23S rRNA, where it nucleates assembly of the 50S subunit. The protein is Large ribosomal subunit protein uL3 of Phytoplasma australiense.